Consider the following 281-residue polypeptide: 2-dehydro-3-deoxyphosphooctonate aldolase (281 aa).

It belongs to the KdsA family.

Its subcellular location is the cytoplasm. The catalysed reaction is D-arabinose 5-phosphate + phosphoenolpyruvate + H2O = 3-deoxy-alpha-D-manno-2-octulosonate-8-phosphate + phosphate. Its pathway is carbohydrate biosynthesis; 3-deoxy-D-manno-octulosonate biosynthesis; 3-deoxy-D-manno-octulosonate from D-ribulose 5-phosphate: step 2/3. The protein operates within bacterial outer membrane biogenesis; lipopolysaccharide biosynthesis. This is 2-dehydro-3-deoxyphosphooctonate aldolase from Pseudomonas syringae pv. tomato (strain ATCC BAA-871 / DC3000).